Reading from the N-terminus, the 132-residue chain is Small ribosomal subunit protein uS8 (132 aa).

It belongs to the universal ribosomal protein uS8 family. Part of the 30S ribosomal subunit. Contacts proteins S5 and S12.

Its function is as follows. One of the primary rRNA binding proteins, it binds directly to 16S rRNA central domain where it helps coordinate assembly of the platform of the 30S subunit. The chain is Small ribosomal subunit protein uS8 from Leifsonia xyli subsp. xyli (strain CTCB07).